Consider the following 220-residue polypeptide: Small ribosomal subunit protein mS42 (220 aa).

The protein belongs to the mitochondrion-specific ribosomal protein mS42 family. Component of the mitochondrial small ribosomal subunit (mt-SSU). Mature yeast 74S mitochondrial ribosomes consist of a small (37S) and a large (54S) subunit. The 37S small subunit contains a 15S ribosomal RNA (15S mt-rRNA) and at least 32 different proteins. The 54S large subunit contains a 21S rRNA (21S mt-rRNA) and at least 45 different proteins. mS43 forms a dimer with mS42, building a large protuberance adjacent to the mRNA channel exit in the mt-SSU body.

It is found in the mitochondrion. Component of the mitochondrial ribosome (mitoribosome), a dedicated translation machinery responsible for the synthesis of mitochondrial genome-encoded proteins, including at least some of the essential transmembrane subunits of the mitochondrial respiratory chain. The mitoribosomes are attached to the mitochondrial inner membrane and translation products are cotranslationally integrated into the membrane. This is Small ribosomal subunit protein mS42 from Schizosaccharomyces pombe (strain 972 / ATCC 24843) (Fission yeast).